Reading from the N-terminus, the 569-residue chain is Proline--tRNA ligase (569 aa).

The protein belongs to the class-II aminoacyl-tRNA synthetase family. ProS type 1 subfamily. Homodimer.

It localises to the cytoplasm. The catalysed reaction is tRNA(Pro) + L-proline + ATP = L-prolyl-tRNA(Pro) + AMP + diphosphate. Its function is as follows. Catalyzes the attachment of proline to tRNA(Pro) in a two-step reaction: proline is first activated by ATP to form Pro-AMP and then transferred to the acceptor end of tRNA(Pro). As ProRS can inadvertently accommodate and process non-cognate amino acids such as alanine and cysteine, to avoid such errors it has two additional distinct editing activities against alanine. One activity is designated as 'pretransfer' editing and involves the tRNA(Pro)-independent hydrolysis of activated Ala-AMP. The other activity is designated 'posttransfer' editing and involves deacylation of mischarged Ala-tRNA(Pro). The misacylated Cys-tRNA(Pro) is not edited by ProRS. The chain is Proline--tRNA ligase from Levilactobacillus brevis (strain ATCC 367 / BCRC 12310 / CIP 105137 / JCM 1170 / LMG 11437 / NCIMB 947 / NCTC 947) (Lactobacillus brevis).